A 190-amino-acid chain; its full sequence is MEKVPGDMEIERRERNEELSEAERKAVQATWARLYANCEDVGVAILVRFFVNFPSAKQYFSQFKHMEDPLEMERSPQLRKHACRVMGALNTVVENLHDPDKVSSVLALVGKAHALKHKVEPMYFKILSGVILDVIAEEFANDFPVETQKAWTKLRGLIYSHVTAAYKEVGWVQQVPNTTTLPATLPSSGP.

The disordered stretch occupies residues 1–21 (MEKVPGDMEIERRERNEELSE). Residues 18 to 167 (ELSEAERKAV…IYSHVTAAYK (150 aa)) enclose the Globin domain. Cysteines 38 and 83 form a disulfide. Heme b-binding residues include histidine 81 and histidine 113.

The protein belongs to the globin family. Monomeric. Homodimer; disulfide-linked in vitro. Also homooligomeric in vitro. The formation of an intramolecular disulfide bond between cysteines Cys-38 and Cys-83 specifically enhances the nitrite reductase activity. Widely expressed (at protein level).

It is found in the cytoplasm. Its subcellular location is the nucleus. It carries out the reaction Fe(II)-heme b-[protein] + nitric oxide + O2 = Fe(III)-heme b-[protein] + nitrate. It catalyses the reaction Fe(III)-heme b-[protein] + nitric oxide + H2O = Fe(II)-heme b-[protein] + nitrite + 2 H(+). The catalysed reaction is 2 superoxide + 2 H(+) = H2O2 + O2. The enzyme catalyses H2O2 + AH2 = A + 2 H2O. With respect to regulation, the nitric oxide dioxygenase activity is activated by a reducing system composed of cytochrome b5, its upstream reductase CYB5R3 and NADH. In terms of biological role, probable multifunctional globin with a hexacoordinated heme iron required for the catalysis of various reactions depending on redox condition of the cell as well as oxygen availability. Has a nitric oxide dioxygenase (NOD) activity and is most probably involved in cell-mediated and oxygen-dependent nitric oxide consumption. By scavenging this second messenger may regulate several biological processes including endothelium-mediated vasodilation and vascular tone. Under normoxic conditions functions as a nitric oxide dioxygenase (NOD) but under hypoxic conditions the globin may switch its function to that of a nitrite (NO2) reductase (NiR), generating nitric oxide. Could also have peroxidase and superoxide dismutase activities, detoxifying reactive oxygen species and protecting cells against oxidative stress. Also binds dioxygen with low affinity and could function as an oxygen sensor but has probably no function as a respiratory oxygen carrier. The protein is Cytoglobin of Rattus norvegicus (Rat).